Reading from the N-terminus, the 143-residue chain is MAKKIIGFIKLQIPAGKANPSPPVGPALGQRGLNIMEFCKAFNAQTQALEPGLPIPVVITAFADKSFTFVLKTPPATVLIKKAAKIDKGSSKPHTDKVGKITRAQAEEIAKTKMPDLTAADLDAAVRTIAGSARSMGITVEGV.

Belongs to the universal ribosomal protein uL11 family. As to quaternary structure, part of the ribosomal stalk of the 50S ribosomal subunit. Interacts with L10 and the large rRNA to form the base of the stalk. L10 forms an elongated spine to which L12 dimers bind in a sequential fashion forming a multimeric L10(L12)X complex. Post-translationally, one or more lysine residues are methylated.

Functionally, forms part of the ribosomal stalk which helps the ribosome interact with GTP-bound translation factors. This Paraburkholderia phymatum (strain DSM 17167 / CIP 108236 / LMG 21445 / STM815) (Burkholderia phymatum) protein is Large ribosomal subunit protein uL11.